Here is a 645-residue protein sequence, read N- to C-terminus: 1,4-alpha-glucan branching enzyme GlgB (645 aa).

Residue Asp-309 is the Nucleophile of the active site. Catalysis depends on Glu-352, which acts as the Proton donor. The segment at Val-619–Arg-645 is disordered. A compositionally biased stretch (polar residues) spans Arg-636–Arg-645.

The protein belongs to the glycosyl hydrolase 13 family. GlgB subfamily. Monomer.

The catalysed reaction is Transfers a segment of a (1-&gt;4)-alpha-D-glucan chain to a primary hydroxy group in a similar glucan chain.. It participates in glycan biosynthesis; glycogen biosynthesis. Functionally, catalyzes the formation of the alpha-1,6-glucosidic linkages in glycogen by scission of a 1,4-alpha-linked oligosaccharide from growing alpha-1,4-glucan chains and the subsequent attachment of the oligosaccharide to the alpha-1,6 position. The protein is 1,4-alpha-glucan branching enzyme GlgB of Bacillus anthracis (strain CDC 684 / NRRL 3495).